We begin with the raw amino-acid sequence, 347 residues long: MNPIIFIIILLTIMLGTIIVMISSHWLLVWIGFEMNMLAIIPIMMKNHNPRATEASTKYFLTQSTASMLLMMAVIINLMFSGQWTVMKLFNPMASMLMTMALAMKLGMAPFHFWVPEVTQGIPLSSGLILLTWQKLAPMSVLYQIFPSINLNLILTLSVLSILIGGWGGLNQTQLRKIMAYSSIAHMGWMTAVLPYNPTMTLLNLIIYIIMTSTMFTMFMANSTTTTLSLSHTWNKTPIMTVLILATLLSMGGLPPLSGFMPKWMIIQEMTKNNSIILPTFMAITALLNLYFYMRLTYSTTLTMFPSTNNMKMKWQFPLMKKMTFLPTMVVLSTMMLPLTPMLSVLE.

Transmembrane regions (helical) follow at residues 3 to 23, 25 to 45, 67 to 87, 96 to 116, 122 to 142, 145 to 165, 178 to 198, 200 to 220, 239 to 259, 274 to 294, and 325 to 345; these read PIIF…VMIS, HWLL…PIMM, SMLL…WTVM, MLMT…FWVP, IPLS…MSVL, IFPS…ILIG, IMAY…PYNP, MTLL…TMFM, IMTV…PLSG, NSII…YFYM, and FLPT…MLSV.

This sequence belongs to the complex I subunit 2 family. As to quaternary structure, core subunit of respiratory chain NADH dehydrogenase (Complex I) which is composed of 45 different subunits. Interacts with TMEM242.

Its subcellular location is the mitochondrion inner membrane. It carries out the reaction a ubiquinone + NADH + 5 H(+)(in) = a ubiquinol + NAD(+) + 4 H(+)(out). In terms of biological role, core subunit of the mitochondrial membrane respiratory chain NADH dehydrogenase (Complex I) which catalyzes electron transfer from NADH through the respiratory chain, using ubiquinone as an electron acceptor. Essential for the catalytic activity and assembly of complex I. The polypeptide is NADH-ubiquinone oxidoreductase chain 2 (Bos indicus (Zebu)).